The sequence spans 1222 residues: ATP-dependent helicase/nuclease subunit A (1222 aa).

A UvrD-like helicase ATP-binding domain is found at 39–495 (QKRTAQQIEA…ILLKENFRSQ (457 aa)). An ATP-binding site is contributed by 60 to 67 (ASAGSGKT). Residues 524 to 810 (QLIAGSHAQT…NLMTIHKSKG (287 aa)) enclose the UvrD-like helicase C-terminal domain.

Belongs to the helicase family. AddA subfamily. As to quaternary structure, heterodimer of AddA and AddB/RexB. Mg(2+) serves as cofactor.

The catalysed reaction is Couples ATP hydrolysis with the unwinding of duplex DNA by translocating in the 3'-5' direction.. The enzyme catalyses ATP + H2O = ADP + phosphate + H(+). Functionally, the heterodimer acts as both an ATP-dependent DNA helicase and an ATP-dependent, dual-direction single-stranded exonuclease. Recognizes the chi site generating a DNA molecule suitable for the initiation of homologous recombination. The AddA nuclease domain is required for chi fragment generation; this subunit has the helicase and 3' -&gt; 5' nuclease activities. The chain is ATP-dependent helicase/nuclease subunit A from Streptococcus pyogenes serotype M12 (strain MGAS2096).